The chain runs to 246 residues: Putative pectinesterase 57 (246 aa).

Residues asparagine 127 and asparagine 143 are each glycosylated (N-linked (GlcNAc...) asparagine). Threonine 152 is a binding site for substrate. N-linked (GlcNAc...) asparagine glycosylation occurs at asparagine 174. The active-site Proton donor is the aspartate 205. Residue aspartate 226 is the Nucleophile of the active site.

It belongs to the pectinesterase family.

The enzyme catalyses [(1-&gt;4)-alpha-D-galacturonosyl methyl ester](n) + n H2O = [(1-&gt;4)-alpha-D-galacturonosyl](n) + n methanol + n H(+). The protein operates within glycan metabolism; pectin degradation; 2-dehydro-3-deoxy-D-gluconate from pectin: step 1/5. Functionally, acts in the modification of cell walls via demethylesterification of cell wall pectin. The sequence is that of Putative pectinesterase 57 (PME57) from Arabidopsis thaliana (Mouse-ear cress).